The following is a 745-amino-acid chain: Aminopeptidase NAALADL1 (745 aa).

Topologically, residues 1–6 are cytoplasmic; it reads MHWVKI. Residues 7–28 form a helical; Signal-anchor for type II membrane protein membrane-spanning segment; sequence LGVALGAAALLGLGIILGHFAI. The Extracellular portion of the chain corresponds to 29–745; sequence PKATSPLTSS…AATLVPVADL (717 aa). 3 N-linked (GlcNAc...) asparagine glycosylation sites follow: Asn-128, Asn-141, and Asn-235. Residues Thr-263 and Leu-266 each contribute to the Ca(2+) site. N-linked (GlcNAc...) asparagine glycosylation is found at Asn-279, Asn-302, and Asn-329. Residues Cys-301 and Cys-318 are joined by a disulfide bond. The Zn(2+) site is built by His-373 and Asp-383. Glu-421 acts as the Proton donor/acceptor in catalysis. Glu-422 is a Zn(2+) binding site. Residues Glu-430 and Glu-433 each contribute to the Ca(2+) site. Asp-450 is a Zn(2+) binding site. 2 N-linked (GlcNAc...) asparagine glycosylation sites follow: Asn-456 and Asn-497. His-550 is a Zn(2+) binding site. N-linked (GlcNAc...) asparagine glycans are attached at residues Asn-593 and Asn-620.

It belongs to the peptidase M28 family. M28B subfamily. Homodimer. It depends on Zn(2+) as a cofactor. In terms of processing, N-glycosylated.

Its subcellular location is the apical cell membrane. In terms of biological role, aminopeptidase with broad substrate specificity. Has lower activity with substrates that have Asp or Glu in the P2' position, or Pro in the P3' position. Lacks activity with substrates that have both Pro in the P3' position and Asp or Glu in the P2' position. Lacks carboxypeptidase activity. Lacks dipeptidyl-peptidase IV type activity. This Mus musculus (Mouse) protein is Aminopeptidase NAALADL1 (Naaladl1).